Here is an 88-residue protein sequence, read N- to C-terminus: Cytochrome c oxidase subunit 6B2 (88 aa).

Residues threonine 29–tryptophan 75 enclose the CHCH domain. Residues cysteine 32–cysteine 42 carry the Cx9C motif motif. 2 disulfide bridges follow: cysteine 32/cysteine 67 and cysteine 42/cysteine 56. A Cx10C motif motif is present at residues cysteine 56–cysteine 67.

This sequence belongs to the cytochrome c oxidase subunit 6B family. As to quaternary structure, component of the cytochrome c oxidase (complex IV, CIV), a multisubunit enzyme composed of 14 subunits. The complex is composed of a catalytic core of 3 subunits MT-CO1, MT-CO2 and MT-CO3, encoded in the mitochondrial DNA, and 11 supernumerary subunits COX4I1 (or COX4I2), COX5A, COX5B, COX6A2 (or COX6A1), COX6B1 (or COX6B2), COX6C, COX7A1 (or COX7A2), COX7B, COX7C, COX8B and NDUFA4, which are encoded in the nuclear genome. The complex exists as a monomer or a dimer and forms supercomplexes (SCs) in the inner mitochondrial membrane with NADH-ubiquinone oxidoreductase (complex I, CI) and ubiquinol-cytochrome c oxidoreductase (cytochrome b-c1 complex, complex III, CIII), resulting in different assemblies (supercomplex SCI(1)III(2)IV(1) and megacomplex MCI(2)III(2)IV(2)). Testis specific.

The protein resides in the mitochondrion inner membrane. The protein operates within energy metabolism; oxidative phosphorylation. Its function is as follows. Component of the cytochrome c oxidase, the last enzyme in the mitochondrial electron transport chain which drives oxidative phosphorylation. The respiratory chain contains 3 multisubunit complexes succinate dehydrogenase (complex II, CII), ubiquinol-cytochrome c oxidoreductase (cytochrome b-c1 complex, complex III, CIII) and cytochrome c oxidase (complex IV, CIV), that cooperate to transfer electrons derived from NADH and succinate to molecular oxygen, creating an electrochemical gradient over the inner membrane that drives transmembrane transport and the ATP synthase. Cytochrome c oxidase is the component of the respiratory chain that catalyzes the reduction of oxygen to water. Electrons originating from reduced cytochrome c in the intermembrane space (IMS) are transferred via the dinuclear copper A center (CU(A)) of subunit 2 and heme A of subunit 1 to the active site in subunit 1, a binuclear center (BNC) formed by heme A3 and copper B (CU(B)). The BNC reduces molecular oxygen to 2 water molecules using 4 electrons from cytochrome c in the IMS and 4 protons from the mitochondrial matrix. The sequence is that of Cytochrome c oxidase subunit 6B2 (COX6B2) from Bos taurus (Bovine).